Reading from the N-terminus, the 450-residue chain is Cytochrome c1 (450 aa).

A signal peptide spans 1–21 (MTLRNASLTAVAALTVALAGG). Low complexity predominate over residues 24 to 58 (AQDASTAPGTTAPAGSSYHTNEAAPAAADTAPAAE). A disordered region spans residues 24–210 (AQDASTAPGT…AAAQEAGDSH (187 aa)). Acidic residues-rich tracts occupy residues 59–77 (AADE…EVTE), 85–108 (PAEE…EPAA), and 118–194 (APAE…EDEA). Residues C245, C248, and H249 each coordinate heme c. The disordered stretch occupies residues 284–305 (PETEEDRPRVPTDHFPTVSGEG). M373 provides a ligand contact to heme c. A helical membrane pass occupies residues 421–435 (SVIFLIVLAALLYLT).

As to quaternary structure, the main subunits of complex b-c1 are: cytochrome b, cytochrome c1 and the Rieske protein. Binds 1 heme c group covalently per subunit.

Its subcellular location is the cell membrane. In terms of biological role, component of the ubiquinol-cytochrome c reductase complex (complex III or cytochrome b-c1 complex), which is a respiratory chain that generates an electrochemical potential coupled to ATP synthesis. c1 functions as an electron donor to cytochrome c. This chain is Cytochrome c1 (petC), found in Paracoccus denitrificans.